Consider the following 426-residue polypeptide: Adenylosuccinate synthetase (426 aa).

GTP contacts are provided by residues 12-18 (GDEGKGK) and 40-42 (GHT). The active-site Proton acceptor is the Asp-13. Mg(2+) is bound by residues Asp-13 and Gly-40. IMP contacts are provided by residues 13 to 16 (DEGK), 38 to 41 (NAGH), Thr-130, Arg-144, Gln-224, Thr-239, and Arg-303. His-41 serves as the catalytic Proton donor. 299-305 (TVTNRVR) provides a ligand contact to substrate. Residues Arg-305, 331–333 (KLD), and 413–415 (STG) each bind GTP.

This sequence belongs to the adenylosuccinate synthetase family. Homodimer. It depends on Mg(2+) as a cofactor.

It localises to the cytoplasm. The enzyme catalyses IMP + L-aspartate + GTP = N(6)-(1,2-dicarboxyethyl)-AMP + GDP + phosphate + 2 H(+). It participates in purine metabolism; AMP biosynthesis via de novo pathway; AMP from IMP: step 1/2. Functionally, plays an important role in the de novo pathway of purine nucleotide biosynthesis. Catalyzes the first committed step in the biosynthesis of AMP from IMP. The polypeptide is Adenylosuccinate synthetase (Anaplasma marginale (strain St. Maries)).